We begin with the raw amino-acid sequence, 274 residues long: Rhamnulose-1-phosphate aldolase (274 aa).

The active site involves E117. Zn(2+) is bound by residues H141, H143, and H212.

This sequence belongs to the aldolase class II family. RhaD subfamily. As to quaternary structure, homotetramer. Zn(2+) is required as a cofactor.

The protein localises to the cytoplasm. The enzyme catalyses L-rhamnulose 1-phosphate = (S)-lactaldehyde + dihydroxyacetone phosphate. The protein operates within carbohydrate degradation; L-rhamnose degradation; glycerone phosphate from L-rhamnose: step 3/3. In terms of biological role, catalyzes the reversible cleavage of L-rhamnulose-1-phosphate to dihydroxyacetone phosphate (DHAP) and L-lactaldehyde. This chain is Rhamnulose-1-phosphate aldolase, found in Escherichia coli (strain SE11).